We begin with the raw amino-acid sequence, 298 residues long: uncharacterized protein (298 aa).

Residues 1–17 show a composition bias toward basic and acidic residues; it reads MLTKSAENKRNRKDDSM. A disordered region spans residues 1-22; the sequence is MLTKSAENKRNRKDDSMRPGQQ. In terms of domain architecture, S1 motif spans 167–227; the sequence is NKELTGTVYR…EDGSVNLSLL (61 aa).

This is an uncharacterized protein from Bacillus subtilis (strain 168).